Reading from the N-terminus, the 133-residue chain is Protein OPG104 (133 aa).

Residues 1–111 (MTDEQIYAFC…RYLNQEIRYP (111 aa)) are Virion surface-facing. A helical; Signal-anchor transmembrane segment spans residues 112 to 132 (IIDIKWLPIGLLALAILILAF).

It belongs to the orthopoxvirus OPG104 family. In terms of assembly, part of a stable entry-fusion complex (EFC) which is at least composed of proteins OPG143, OPG147, OPG155, OPG086, OPG094, OPG107, OPG104, and OPG099. Formation of the viral membrane is necessary for the assembly of the complex.

The protein localises to the virion membrane. Functionally, envelope protein part of the entry-fusion complex responsible for the virus membrane fusion with host cell membrane during virus entry. Also plays a role in cell-cell fusion (syncytium formation). The protein is Protein OPG104 (OPG104) of Homo sapiens (Human).